We begin with the raw amino-acid sequence, 480 residues long: NADH-quinone oxidoreductase subunit N (480 aa).

Transmembrane regions (helical) follow at residues 11–31 (LLPE…GVFA), 38–58 (LVAA…AGLL), 76–96 (FALY…IAAA), 105–125 (APEY…LVSM), 128–148 (LFGV…MVAF), 163–183 (LITG…IYGV), 195–215 (AFGE…ISGL), 240–260 (AAFL…RILL), 270–290 (WTAL…LLAL), 298–318 (MLAY…AALQ), 329–349 (VMIY…TIDL), 368–388 (AAAM…SGFF), 407–427 (VAVA…FGII), and 453–473 (VYAM…LAAL).

It belongs to the complex I subunit 2 family. NDH-1 is composed of 14 different subunits. Subunits NuoA, H, J, K, L, M, N constitute the membrane sector of the complex.

It is found in the cell membrane. The enzyme catalyses a quinone + NADH + 5 H(+)(in) = a quinol + NAD(+) + 4 H(+)(out). Its function is as follows. NDH-1 shuttles electrons from NADH, via FMN and iron-sulfur (Fe-S) centers, to quinones in the respiratory chain. The immediate electron acceptor for the enzyme in this species is believed to be a menaquinone. Couples the redox reaction to proton translocation (for every two electrons transferred, four hydrogen ions are translocated across the cytoplasmic membrane), and thus conserves the redox energy in a proton gradient. In Rubrobacter xylanophilus (strain DSM 9941 / JCM 11954 / NBRC 16129 / PRD-1), this protein is NADH-quinone oxidoreductase subunit N.